We begin with the raw amino-acid sequence, 453 residues long: GTPase Der (453 aa).

EngA-type G domains follow at residues 3–178 (PKIA…PNNE) and 190–363 (LKLA…LECS). Residues 9–16 (GRPNVGKS), 57–61 (DTGGV), 130–133 (NKVD), 196–203 (GRPNAGKS), 243–247 (DTAGI), and 308–311 (NKTD) each bind GTP. A KH-like domain is found at 364 to 448 (TRINTGVLNR…PIRIRLRSSH (85 aa)).

It belongs to the TRAFAC class TrmE-Era-EngA-EngB-Septin-like GTPase superfamily. EngA (Der) GTPase family. As to quaternary structure, associates with the 50S ribosomal subunit.

Its function is as follows. GTPase that plays an essential role in the late steps of ribosome biogenesis. This chain is GTPase Der, found in Lawsonia intracellularis (strain PHE/MN1-00).